The primary structure comprises 566 residues: DNA ligase B (566 aa).

The active-site N6-AMP-lysine intermediate is the Lys125.

The protein belongs to the NAD-dependent DNA ligase family. LigB subfamily.

It carries out the reaction NAD(+) + (deoxyribonucleotide)n-3'-hydroxyl + 5'-phospho-(deoxyribonucleotide)m = (deoxyribonucleotide)n+m + AMP + beta-nicotinamide D-nucleotide.. Functionally, catalyzes the formation of phosphodiester linkages between 5'-phosphoryl and 3'-hydroxyl groups in double-stranded DNA using NAD as a coenzyme and as the energy source for the reaction. The chain is DNA ligase B from Pseudomonas putida (strain ATCC 700007 / DSM 6899 / JCM 31910 / BCRC 17059 / LMG 24140 / F1).